The primary structure comprises 367 residues: Isocitrate dehydrogenase [NAD] regulatory subunit 1, mitochondrial (367 aa).

Residues 1 to 25 constitute a mitochondrion transit peptide; it reads MSRRSLTLLKNLARNANGSGIQTRS.

This sequence belongs to the isocitrate and isopropylmalate dehydrogenases family. As to quaternary structure, heterooligomer of catalytic and regulatory subunits. As to expression, ubiquitous. Predominantly expressed in roots, stems and leaves.

The protein resides in the mitochondrion. In terms of biological role, performs an essential role in the oxidative function of the citric acid cycle. This is Isocitrate dehydrogenase [NAD] regulatory subunit 1, mitochondrial (IDH1) from Arabidopsis thaliana (Mouse-ear cress).